The primary structure comprises 279 residues: Polyamine aminopropyltransferase (279 aa).

A PABS domain is found at 4 to 237 (IEWYPRGYGV…SPWAFLVGIK (234 aa)). Residue Gln-29 participates in S-methyl-5'-thioadenosine binding. Residues His-60 and Asp-84 each contribute to the spermidine site. S-methyl-5'-thioadenosine-binding positions include Glu-104 and 141 to 142 (DG). The Proton acceptor role is filled by Asp-158. 158–161 (DSTD) is a spermidine binding site. Pro-165 is an S-methyl-5'-thioadenosine binding site.

The protein belongs to the spermidine/spermine synthase family. Homodimer or homotetramer.

It localises to the cytoplasm. The catalysed reaction is S-adenosyl 3-(methylsulfanyl)propylamine + putrescine = S-methyl-5'-thioadenosine + spermidine + H(+). Its pathway is amine and polyamine biosynthesis; spermidine biosynthesis; spermidine from putrescine: step 1/1. In terms of biological role, catalyzes the irreversible transfer of a propylamine group from the amino donor S-adenosylmethioninamine (decarboxy-AdoMet) to putrescine (1,4-diaminobutane) to yield spermidine. This is Polyamine aminopropyltransferase from Pyrococcus abyssi (strain GE5 / Orsay).